Here is a 554-residue protein sequence, read N- to C-terminus: uncharacterized protein (554 aa).

The disordered stretch occupies residues 1-25 (MSSSIPPRLYDMSPTESKKQEDVSE). Residue Ser13 is modified to Phosphoserine. 6 consecutive transmembrane segments (helical) span residues 82-102 (FFVAGFGWMSDNIWPVCTSLI), 120-140 (APYLTLSQNLGLLVGAMVWSL), 149-169 (WAFNLTFLFTGVFAVIAGASP), 171-191 (FASICVFDALWSFGVGGNLPV), 210-230 (VMSFWWAIGQVIANLVSWGLI), and 253-273 (FLFTMGGMTLLMFAARFLVSV). Phosphoserine is present on Ser334. A run of 6 helical transmembrane segments spans residues 364 to 384 (LAISSILVILSWAVIGLAFPL), 412 to 432 (SLIVSAIGVPGSLIAGVLVEF), 437 to 457 (KGTLCLSLILTGVFLFASTTA), 462 to 482 (AYLGWNCTFSFFSDIMYGVLY), 497 to 517 (AVGLAASANRILGIFSPVIAM), and 525 to 545 (APIFVSGALFIFAGILVVFFP).

This sequence belongs to the major facilitator superfamily.

It localises to the endoplasmic reticulum. The protein resides in the membrane. This is an uncharacterized protein from Schizosaccharomyces pombe (strain 972 / ATCC 24843) (Fission yeast).